A 247-amino-acid chain; its full sequence is ATP synthase subunit a, chloroplastic (247 aa).

5 helical membrane-spanning segments follow: residues 38 to 58 (QVLI…TIAV), 95 to 115 (VPFI…GALF), 134 to 154 (INTT…AGLT), 199 to 219 (LVVV…VMFL), and 220 to 240 (GLFT…AYIG).

It belongs to the ATPase A chain family. F-type ATPases have 2 components, CF(1) - the catalytic core - and CF(0) - the membrane proton channel. CF(1) has five subunits: alpha(3), beta(3), gamma(1), delta(1), epsilon(1). CF(0) has four main subunits: a, b, b' and c.

Its subcellular location is the plastid. The protein localises to the chloroplast thylakoid membrane. Key component of the proton channel; it plays a direct role in the translocation of protons across the membrane. The polypeptide is ATP synthase subunit a, chloroplastic (Piper cenocladum (Ant piper)).